The primary structure comprises 427 residues: V-type proton ATPase subunit C 2 (427 aa).

Positions 298 to 320 (PLGNPARPAAGQTDRDRESEGEG) are disordered.

This sequence belongs to the V-ATPase C subunit family. V-ATPase is a heteromultimeric enzyme made up of two complexes: the ATP-hydrolytic V1 complex and the proton translocation V0 complex. The V1 complex consists of three catalytic AB heterodimers that form a heterohexamer, three peripheral stalks each consisting of EG heterodimers, one central rotor including subunits D and F, and the regulatory subunits C and H. The proton translocation complex V0 consists of the proton transport subunit a, a ring of proteolipid subunits c9c'', rotary subunit d, subunits e and f, and the accessory subunits ATP6AP1/Ac45 and ATP6AP2/PRR. Predominantly expressed in the lung and kidney. Isoform 1 is lung-specific while isoform 3 is a kidney-specific isoform. Isoform 1 is localized in the lamellar bodies of type II alveolar cells. Isoform 2 is strongly expressed in the cortical and medulla collecting ducts and is found in the plasma membranes of renal alpha and beta intercalated cells.

Its function is as follows. Subunit of the V1 complex of vacuolar(H+)-ATPase (V-ATPase), a multisubunit enzyme composed of a peripheral complex (V1) that hydrolyzes ATP and a membrane integral complex (V0) that translocates protons. V-ATPase is responsible for acidifying and maintaining the pH of intracellular compartments and in some cell types, is targeted to the plasma membrane, where it is responsible for acidifying the extracellular environment. Subunit C is necessary for the assembly of the catalytic sector of the enzyme and is likely to have a specific function in its catalytic activity. The chain is V-type proton ATPase subunit C 2 (Atp6v1c2) from Mus musculus (Mouse).